The chain runs to 334 residues: Glycerol-3-phosphate dehydrogenase [NAD(P)+] (334 aa).

The NADPH site is built by tryptophan 13, arginine 33, and lysine 106. The sn-glycerol 3-phosphate site is built by lysine 106, glycine 137, and serine 139. Residue alanine 141 participates in NADPH binding. Sn-glycerol 3-phosphate is bound by residues lysine 192, aspartate 245, serine 255, arginine 256, and asparagine 257. The active-site Proton acceptor is lysine 192. Residue arginine 256 coordinates NADPH. NADPH contacts are provided by valine 280 and glutamate 282.

The protein belongs to the NAD-dependent glycerol-3-phosphate dehydrogenase family.

It localises to the cytoplasm. The enzyme catalyses sn-glycerol 3-phosphate + NAD(+) = dihydroxyacetone phosphate + NADH + H(+). It carries out the reaction sn-glycerol 3-phosphate + NADP(+) = dihydroxyacetone phosphate + NADPH + H(+). The protein operates within membrane lipid metabolism; glycerophospholipid metabolism. Catalyzes the reduction of the glycolytic intermediate dihydroxyacetone phosphate (DHAP) to sn-glycerol 3-phosphate (G3P), the key precursor for phospholipid synthesis. The protein is Glycerol-3-phosphate dehydrogenase [NAD(P)+] of Chlamydia caviae (strain ATCC VR-813 / DSM 19441 / 03DC25 / GPIC) (Chlamydophila caviae).